The chain runs to 356 residues: Histidinol-phosphate aminotransferase (356 aa).

Lysine 214 carries the N6-(pyridoxal phosphate)lysine modification.

This sequence belongs to the class-II pyridoxal-phosphate-dependent aminotransferase family. Histidinol-phosphate aminotransferase subfamily. In terms of assembly, homodimer. The cofactor is pyridoxal 5'-phosphate.

The catalysed reaction is L-histidinol phosphate + 2-oxoglutarate = 3-(imidazol-4-yl)-2-oxopropyl phosphate + L-glutamate. It participates in amino-acid biosynthesis; L-histidine biosynthesis; L-histidine from 5-phospho-alpha-D-ribose 1-diphosphate: step 7/9. This Escherichia coli O7:K1 (strain IAI39 / ExPEC) protein is Histidinol-phosphate aminotransferase.